A 154-amino-acid chain; its full sequence is Putative flagella-related protein G (154 aa).

The chain crosses the membrane as a helical span at residues 9–29; it reads MSEIVMFVAVLLIAAFVAGIL.

This sequence belongs to the archaeal FlaG family.

It is found in the cell membrane. The protein resides in the archaeal flagellum. The sequence is that of Putative flagella-related protein G (flaG) from Methanocaldococcus jannaschii (strain ATCC 43067 / DSM 2661 / JAL-1 / JCM 10045 / NBRC 100440) (Methanococcus jannaschii).